The sequence spans 406 residues: GTPase Obg (406 aa).

Residues 1–159 (MKFVDEVSIH…RDLKLELKVL (159 aa)) enclose the Obg domain. The disordered stretch occupies residues 127–148 (NTRFKSSTNRAPRQTTPGKPGE). Polar residues predominate over residues 129 to 143 (RFKSSTNRAPRQTTP). The 175-residue stretch at 160–334 (ADVGLLGLPN…LSQDIMRYLD (175 aa)) folds into the OBG-type G domain. Residues 166-173 (GLPNAGKS), 191-195 (FTTLV), 213-216 (DIPG), 283-286 (NKMD), and 315-317 (SAL) each bind GTP. Mg(2+)-binding residues include Ser173 and Thr193. A disordered region spans residues 382–406 (AGAVDDDDFDDEEDDGDGPEIFYVP). A compositionally biased stretch (acidic residues) spans 385-399 (VDDDDFDDEEDDGDG).

The protein belongs to the TRAFAC class OBG-HflX-like GTPase superfamily. OBG GTPase family. Monomer. Mg(2+) serves as cofactor.

It is found in the cytoplasm. An essential GTPase which binds GTP, GDP and possibly (p)ppGpp with moderate affinity, with high nucleotide exchange rates and a fairly low GTP hydrolysis rate. Plays a role in control of the cell cycle, stress response, ribosome biogenesis and in those bacteria that undergo differentiation, in morphogenesis control. In Pseudomonas aeruginosa (strain LESB58), this protein is GTPase Obg.